The primary structure comprises 84 residues: Small ribosomal subunit protein uS15 (84 aa).

It belongs to the universal ribosomal protein uS15 family. In terms of assembly, part of the 30S ribosomal subunit. Forms a bridge to the 50S subunit in the 70S ribosome, contacting the 23S rRNA.

In terms of biological role, one of the primary rRNA binding proteins, it binds directly to 16S rRNA where it helps nucleate assembly of the platform of the 30S subunit by binding and bridging several RNA helices of the 16S rRNA. Its function is as follows. Forms an intersubunit bridge (bridge B4) with the 23S rRNA of the 50S subunit in the ribosome. The chain is Small ribosomal subunit protein uS15 from Fervidobacterium nodosum (strain ATCC 35602 / DSM 5306 / Rt17-B1).